A 162-amino-acid polypeptide reads, in one-letter code: Troponin C, skeletal muscle (162 aa).

Ala-1 is subject to N-acetylalanine. EF-hand domains are found at residues 17-52 (EMIA…LGQT), 53-88 (PTKE…QMKE), 93-128 (KSEE…SGES), and 129-162 (ITDE…EGVQ). Positions 30, 32, 36, 41, 66, 68, 70, 72, 77, 106, 108, 110, 112, 117, 142, 144, 146, 148, and 153 each coordinate Ca(2+).

It belongs to the troponin C family.

In terms of biological role, troponin is the central regulatory protein of striated muscle contraction. Tn consists of three components: Tn-I which is the inhibitor of actomyosin ATPase, Tn-T which contains the binding site for tropomyosin and Tn-C. The binding of calcium to Tn-C abolishes the inhibitory action of Tn on actin filaments. This Pelophylax lessonae (Pool frog) protein is Troponin C, skeletal muscle.